The following is a 556-amino-acid chain: Bifunctional methyltransferase (556 aa).

The interval 1–310 is RF MTase; that stretch reads MQYSIQKFLN…NRVIEISLIQ (310 aa). S-adenosyl-L-methionine is bound by residues 148-152, Asp171, Trp200, and Asn215; that span reads GTGSG. Residue 215–218 coordinates substrate; it reads NPPY. Residues 313-556 are tRNA MTase; it reads RSYARRIGKS…IITKIPPKSY (244 aa). The interval 348-399 is insert; the sequence is KNYNSCKIKSNYTKFNLEKSKESVSRGAERIKIREHLRTYKEDVANFSSSTS. Positions 403, 428, 455, and 477 each coordinate S-adenosyl-L-methionine. The active site involves Asp477. Positions 481 and 513 each coordinate substrate.

It in the C-terminal section; belongs to the class I-like SAM-binding methyltransferase superfamily. TrmB family. In the N-terminal section; belongs to the protein N5-glutamine methyltransferase family. PrmC subfamily.

It carries out the reaction L-glutaminyl-[peptide chain release factor] + S-adenosyl-L-methionine = N(5)-methyl-L-glutaminyl-[peptide chain release factor] + S-adenosyl-L-homocysteine + H(+). It catalyses the reaction guanosine(46) in tRNA + S-adenosyl-L-methionine = N(7)-methylguanosine(46) in tRNA + S-adenosyl-L-homocysteine. In terms of biological role, methylates the class 1 translation termination release factors RF1/PrfA and RF2/PrfB on the glutamine residue of the universally conserved GGQ motif. Functionally, catalyzes the formation of N(7)-methylguanine at position 46 (m7G46) in tRNA. The chain is Bifunctional methyltransferase (prmC/trmB) from Rickettsia bellii (strain RML369-C).